A 221-amino-acid chain; its full sequence is MLDTKPSATRRIPLVIATVAVGGLAGFAALYGLGLSRAPTGDPACRAAVATAQKIAPLAHGEVAALTMASAPLKLPDLAFEDADGKPKKLSDFRGKTLLVNLWATWCVPCRKEMPALDELQGKLSGPNFEVVAINIDTRDPEKPKTFLKEANLTRLGYFNDQKAKVFQDLKAIGRALGMPTSVLVDPQGCEIATIAGPAEWASEDALKLIRAATGKAAAAL.

Residues 1–11 (MLDTKPSATRR) are Cytoplasmic-facing. Residues 12-35 (IPLVIATVAVGGLAGFAALYGLGL) traverse the membrane as a helical segment. Over 36–221 (SRAPTGDPAC…AATGKAAAAL (186 aa)) the chain is Periplasmic. Intrachain disulfides connect Cys45–Cys190 and Cys107–Cys110. The Thioredoxin domain maps to 69–215 (ASAPLKLPDL…ALKLIRAATG (147 aa)).

This sequence belongs to the thioredoxin family. As to quaternary structure, monomer.

It is found in the cell membrane. In terms of biological role, involved in cytochrome aa3 assembly. This chain is Thiol:disulfide interchange protein TlpA (tlpA), found in Bradyrhizobium diazoefficiens (strain JCM 10833 / BCRC 13528 / IAM 13628 / NBRC 14792 / USDA 110).